The sequence spans 220 residues: MADS-box protein AGL24 (220 aa).

An MADS-box domain is found at Met-1 to Arg-61. Residues Leu-87–Ala-177 form the K-box domain. Polar residues predominate over residues Ser-190–Ser-200. The segment at Ser-190–Glu-220 is disordered.

In terms of assembly, interacts with IMK3/MRLK. Forms a homodimer and heterodimer with SOC1, AP1 and SVP through MADS-box domain. Interacts with the SEU-LUG corepressor complex when complexed to AP1. Interacts with AGL15 and AGL16. In terms of processing, phosphorylated by IMK3. Induced by vernalization. As to expression, mostly expressed in shoot apical meristems, including floral meristems. Also detected in stems, seedlings, leaves, flowers and siliques, and, to a lower extent, in roots.

The protein resides in the nucleus. The protein localises to the cytoplasm. Its function is as follows. Transcription activator that mediates floral transition in response to vernalization. Promotes inflorescence fate in apical meristems. Acts in a dosage-dependent manner. Probably involved in the transduction of RLK-mediated signaling (e.g. IMK3 pathway). Together with AP1 and SVP, controls the identity of the floral meristem and regulates expression of class B, C and E genes. When associated with SOC1, mediates effect of gibberellins on flowering under short-day conditions, and regulates the expression of LEAFY (LFY), which links floral induction and floral development. Confers inflorescence characteristics to floral primordia and early flowering. This chain is MADS-box protein AGL24 (AGL24), found in Arabidopsis thaliana (Mouse-ear cress).